The following is a 758-amino-acid chain: Vitamin K-dependent gamma-carboxylase (758 aa).

The segment at 1–34 (MAVSARPARAPRGPDKVKKDKAAQTSGPRQGSQM) is disordered. Position 2 is an N-acetylalanine (A2). The Cytoplasmic portion of the chain corresponds to 2-60 (AVSARPARAPRGPDKVKKDKAAQTSGPRQGSQMGKLLGFEWTDVSSWERLVTLLNRPTD). Positions 12–22 (RGPDKVKKDKA) are enriched in basic and acidic residues. A compositionally biased stretch (polar residues) spans 23 to 33 (AQTSGPRQGSQ). The helical transmembrane segment at 61-81 (PASLAVFRFLFGLMMVLDIPQ) threads the bilayer. At 82–113 (ERGLSSLDRRYLDGLEVCRFPLLDALQPLPLD) the chain is on the lumenal side. C99 and C450 are disulfide-bonded. The chain crosses the membrane as a helical span at residues 114 to 134 (WMYLVYTIMFLGALGMMLGLC). At 135 to 136 (YR) the chain is on the cytoplasmic side. The chain crosses the membrane as a helical span at residues 137 to 157 (ISCVLFLLPYWYVFLLDKTSW). The Lumenal portion of the chain corresponds to 158 to 292 (NNHSYLYGLL…VSYFHCMNSQ (135 aa)). Residues 293–313 (LFSIGMFPYVMLASSPLFCSP) form a helical membrane-spanning segment. The Cytoplasmic portion of the chain corresponds to 314–361 (EWPRKLVAHCPKKLQELLPLRTAPQPSTSCMYKRSRARGSQKPGLRHQ). A helical transmembrane segment spans residues 362–382 (LSTAFTLLYLLEQLFLPYSHF). Residues 383 to 758 (LTQGYNNWTN…PDSHPVHSEF (376 aa)) lie on the Lumenal side of the membrane. The segment at 726-758 (RPFEPAGEPSPVNTDSSNPNPPEPDSHPVHSEF) is disordered. Basic and acidic residues predominate over residues 749 to 758 (PDSHPVHSEF).

The protein belongs to the vitamin K-dependent gamma-carboxylase family. In terms of assembly, monomer. May interact with CALU.

It is found in the endoplasmic reticulum membrane. The catalysed reaction is 4-carboxy-L-glutamyl-[protein] + 2,3-epoxyphylloquinone + H2O + H(+) = phylloquinol + L-glutamyl-[protein] + CO2 + O2. Mediates the vitamin K-dependent carboxylation of glutamate residues to calcium-binding gamma-carboxyglutamate (Gla) residues with the concomitant conversion of the reduced hydroquinone form of vitamin K to vitamin K epoxide. Catalyzes gamma-carboxylation of various proteins, such as blood coagulation factors (F2, F7, F9 and F10), osteocalcin (BGLAP) or matrix Gla protein (MGP). The chain is Vitamin K-dependent gamma-carboxylase (GGCX) from Ovis aries (Sheep).